The following is a 214-amino-acid chain: Methylthioribulose-1-phosphate dehydratase (214 aa).

Residues His103 and His105 each contribute to the Zn(2+) site.

It belongs to the aldolase class II family. MtnB subfamily. Zn(2+) serves as cofactor.

It carries out the reaction 5-(methylsulfanyl)-D-ribulose 1-phosphate = 5-methylsulfanyl-2,3-dioxopentyl phosphate + H2O. Its pathway is amino-acid biosynthesis; L-methionine biosynthesis via salvage pathway; L-methionine from S-methyl-5-thio-alpha-D-ribose 1-phosphate: step 2/6. Catalyzes the dehydration of methylthioribulose-1-phosphate (MTRu-1-P) into 2,3-diketo-5-methylthiopentyl-1-phosphate (DK-MTP-1-P). The polypeptide is Methylthioribulose-1-phosphate dehydratase (Granulibacter bethesdensis (strain ATCC BAA-1260 / CGDNIH1)).